Here is a 480-residue protein sequence, read N- to C-terminus: Dihydrolipoyllysine-residue acetyltransferase component 4 of pyruvate dehydrogenase complex, chloroplastic (480 aa).

Residues methionine 1–serine 53 constitute a chloroplast transit peptide. Residues isoleucine 55 to glutamate 133 enclose the Lipoyl-binding domain. An N6-lipoyllysine modification is found at lysine 96. Disordered stretches follow at residues lysine 140–proline 168 and alanine 224–alanine 245. Positions lysine 142–valine 156 are enriched in low complexity. A Peripheral subunit-binding (PSBD) domain is found at valine 187 to alanine 224. Residues alanine 234 to valine 243 are compositionally biased toward pro residues. Histidine 453 is a catalytic residue.

This sequence belongs to the 2-oxoacid dehydrogenase family. The cofactor is (R)-lipoate.

Its subcellular location is the plastid. The protein localises to the chloroplast stroma. The catalysed reaction is N(6)-[(R)-dihydrolipoyl]-L-lysyl-[protein] + acetyl-CoA = N(6)-[(R)-S(8)-acetyldihydrolipoyl]-L-lysyl-[protein] + CoA. The pyruvate dehydrogenase complex catalyzes the overall conversion of pyruvate to acetyl-CoA and CO(2). It contains multiple copies of three enzymatic components: pyruvate dehydrogenase (E1), dihydrolipoamide acetyltransferase (E2) and lipoamide dehydrogenase (E3). In Arabidopsis thaliana (Mouse-ear cress), this protein is Dihydrolipoyllysine-residue acetyltransferase component 4 of pyruvate dehydrogenase complex, chloroplastic (LTA2).